Consider the following 249-residue polypeptide: MAAPKAEGEDKPKRVRKSRAKPKPETKEVKKPKSKEFCTADDSSDDYNEVKPSPAMIALMAVKEIPESEDVPDKSDSEAEAPVPAIVKKRRTPPKKAESSDDKKLDEATGEQVIDEDALSKLTIQTLKGMCKTRNLKISGNKAALVQRLIEADGIAHIIPTTATVVQKVKKTKRPAVFSKVDSELKLIPCPGREHMLMDEATGLVFLDEDPSTAVGFIEHGEVFGLDSEHMTVCKNMGIRYSWTEDYLC.

Basic and acidic residues-rich tracts occupy residues 1–12 (MAAPKAEGEDKP), 22–38 (PKPE…KEFC), and 95–107 (KKAE…KLDE). The tract at residues 1–110 (MAAPKAEGED…DDKKLDEATG (110 aa)) is disordered. An SAP domain is found at 119-153 (LSKLTIQTLKGMCKTRNLKISGNKAALVQRLIEAD).

The polypeptide is Putative SAP domain-containing protein 049L (Frog virus 3 (isolate Goorha) (FV-3)).